The chain runs to 97 residues: DNA-binding protein HU (97 aa).

This sequence belongs to the bacterial histone-like protein family. As to quaternary structure, has been isolated in complexes with 5S rRNA and bL25, and with 5S rRNA, bL25 and uL5. Homodimer.

Functionally, histone-like DNA-binding protein which is capable of wrapping DNA to stabilize it, and thus to prevent its denaturation under extreme environmental conditions. The sequence is that of DNA-binding protein HU from Thermus thermophilus (strain ATCC 27634 / DSM 579 / HB8).